A 115-amino-acid polypeptide reads, in one-letter code: Potassium-transporting ATPase potassium-binding subunit (115 aa).

The next 2 membrane-spanning stretches (helical) occupy residues 8–28 and 60–80; these read YFLL…VAFF and SYCT…YGLL.

The protein belongs to the KdpA family. As to quaternary structure, the system is composed of three essential subunits: KdpA, KdpB and KdpC.

The protein localises to the cell membrane. Part of the high-affinity ATP-driven potassium transport (or Kdp) system, which catalyzes the hydrolysis of ATP coupled with the electrogenic transport of potassium into the cytoplasm. This subunit binds the extracellular potassium ions and delivers the ions to the membrane domain of KdpB through an intramembrane tunnel. The sequence is that of Potassium-transporting ATPase potassium-binding subunit from Geobacillus stearothermophilus (Bacillus stearothermophilus).